The primary structure comprises 316 residues: 1-aminocyclopropane-1-carboxylate oxidase 2 (316 aa).

Residues 153–253 (PNFGTKVSNY…RMSLASFYNP (101 aa)) enclose the Fe2OG dioxygenase domain. Fe cation is bound by residues His177, Asp179, and His234.

The protein belongs to the iron/ascorbate-dependent oxidoreductase family. Fe cation serves as cofactor. As to expression, leaves.

The catalysed reaction is 1-aminocyclopropane-1-carboxylate + L-ascorbate + O2 = ethene + L-dehydroascorbate + hydrogen cyanide + CO2 + 2 H2O. It functions in the pathway alkene biosynthesis; ethylene biosynthesis via S-adenosyl-L-methionine; ethylene from S-adenosyl-L-methionine: step 2/2. This chain is 1-aminocyclopropane-1-carboxylate oxidase 2 (ACO2), found in Solanum lycopersicum (Tomato).